Reading from the N-terminus, the 338-residue chain is RAB6-interacting golgin (338 aa).

Composition is skewed to basic and acidic residues over residues Met-1 to Leu-14 and Arg-46 to Arg-59. 2 disordered regions span residues Met-1–Asp-109 and Ala-127–Lys-188. Low complexity-rich tracts occupy residues Lys-60–Pro-73 and Ser-153–Ser-167. Residues Leu-192–Asp-244 are a coiled coil. The tract at residues Asp-244–Cys-260 is essential for Sas-6 binding. The necessary for localization to the centrosome stretch occupies residues Ala-246–Asn-286. The necessary for localization to the Golgi stretch occupies residues Ala-246–Ser-323. The segment at Cys-260–Asn-286 is necessary for interaction with Sas-6 and essential for homodimerization.

The protein belongs to the GORAB family. As to quaternary structure, homodimer (via C-terminus); dimerization appears to be required for its trans-Golgi localization but not for its function and centriolar localization. Interacts (via C-terminus) with Rab6; binds Rab6 as a homodimer, this interaction seems to be required for trans-Golgi localization. Interacts (via C-terminus) with Sas-6; binds as a monomer to a Sas-6 homodimer.

It localises to the cytoplasm. The protein localises to the cytoskeleton. The protein resides in the microtubule organizing center. It is found in the centrosome. Its subcellular location is the centriole. It localises to the golgi apparatus. The protein localises to the trans-Golgi network. Required for centriole duplication likely through its interaction with Sas-6. During embryogenesis, maternally provided protein is required for centrosome duplication and nuclear division cycles of the syncytial embryos. In femoral chordotonal organs, required for sensory cilia structural integrity and functionality necessary for motor coordination. In male germline, has a role in cytokinesis which seems dependent on its localization to the Golgi. The polypeptide is RAB6-interacting golgin (Drosophila melanogaster (Fruit fly)).